We begin with the raw amino-acid sequence, 292 residues long: RNA-binding P34 protein (292 aa).

A helical transmembrane segment spans residues 29-46; that stretch reads CAIYTVACRILFLSVGFM. The interval 219–292 is RNA-binding; the sequence is EGFKSPQVEY…NFKAKNKNNE (74 aa).

It is found in the host endoplasmic reticulum membrane. Its function is as follows. Acts as a ssRNA-binding protein that may be involved in targeting RNA2 to replication sites or facilitating RNA2 replication. This chain is RNA-binding P34 protein, found in Lettuce infectious yellows virus (isolate United States/92) (LIYV).